The chain runs to 249 residues: tRNA (guanine-N(1)-)-methyltransferase (249 aa).

S-adenosyl-L-methionine contacts are provided by residues Gly113 and 133 to 138 (IGDYVL).

This sequence belongs to the RNA methyltransferase TrmD family. Homodimer.

The protein localises to the cytoplasm. The catalysed reaction is guanosine(37) in tRNA + S-adenosyl-L-methionine = N(1)-methylguanosine(37) in tRNA + S-adenosyl-L-homocysteine + H(+). In terms of biological role, specifically methylates guanosine-37 in various tRNAs. This chain is tRNA (guanine-N(1)-)-methyltransferase, found in Aeromonas hydrophila subsp. hydrophila (strain ATCC 7966 / DSM 30187 / BCRC 13018 / CCUG 14551 / JCM 1027 / KCTC 2358 / NCIMB 9240 / NCTC 8049).